A 312-amino-acid polypeptide reads, in one-letter code: MFKSGSGSLKRSGSISSVKSFSGDSEKGLPPISRGSVSIASQNSEPLIVPASSSSFAATSDFVPEKTKSEGNLKNKSSVITGNFGSSGPTNAHYNQNANGDRLAENLLLKESSKGRGSSTPDARHTATDSRLSQEVKQPFSEENASGNDLNTGRGSHGTGDGVEQYYKFDCEEGMSAYHKRVVDTFFKYFEYPAEDGHSTLYSDVMFLSGGGDLGLLVMSRYQEVMTLRLRSAIYGIFCYLQALTAYLTYFSAKVGQAVMLDEELEKYEIRLDVAQDDDPIVFQITTGVFTSGVAHDLRKLTQILETFSLER.

Over residues 1-23 (MFKSGSGSLKRSGSISSVKSFSG) the composition is skewed to low complexity. 3 disordered regions span residues 1–37 (MFKS…RGSV), 62–97 (FVPE…YNQN), and 112–159 (SSKG…SHGT). The span at 63–73 (VPEKTKSEGNL) shows a compositional bias: basic and acidic residues. Over residues 74-97 (KNKSSVITGNFGSSGPTNAHYNQN) the composition is skewed to polar residues. Residues 122–134 (DARHTATDSRLSQ) show a composition bias toward basic and acidic residues. Residues 135–154 (EVKQPFSEENASGNDLNTGR) are compositionally biased toward polar residues.

The protein belongs to the phytoreovirus non-structural protein Pns12A family.

Its subcellular location is the host cytoplasm. Constituent of viral factories. The protein is Non-structural protein 12A of Rice dwarf virus (isolate O) (RDV).